A 222-amino-acid polypeptide reads, in one-letter code: V-type ATP synthase subunit D (222 aa).

This sequence belongs to the V-ATPase D subunit family.

In terms of biological role, produces ATP from ADP in the presence of a proton gradient across the membrane. The polypeptide is V-type ATP synthase subunit D (Clostridioides difficile (strain 630) (Peptoclostridium difficile)).